The sequence spans 316 residues: Probable metal transport system membrane protein TC_0342 (316 aa).

10 helical membrane-spanning segments follow: residues 1-21 (MFASISPYYGVSFFEFFIVFF), 39-59 (IQVIVFFAIAVSCSIIGTFLV), 64-84 (AMYANVVSHTILFGLVCACLF), 94-114 (QNLTIAAISTTLLTGASIHFI), 124-144 (ASTALVFSLLFSASLLLLVFL), 171-191 (FLVLLXNLGVSYCFFSSFICV), 196-216 (VFAFSLGIRVKLIDYLMMFLL), 226-246 (AVGVLMSLAFLLVPGLIAKLI), 252-272 (EMMGYSMIFGVLSALIAPALS), and 286-306 (SGLAVCLLLVFYIGTLATVFV).

It belongs to the ABC-3 integral membrane protein family.

The protein localises to the cell inner membrane. Its function is as follows. Part of an ATP-driven transport system TC_0338/TC_0339/TC_0341/TC_0342 for a metal. The polypeptide is Probable metal transport system membrane protein TC_0342 (Chlamydia muridarum (strain MoPn / Nigg)).